The following is a 349-amino-acid chain: Eukaryotic translation initiation factor 3 subunit I (349 aa).

WD repeat units follow at residues 8 to 49 (GHER…GTLE), 51 to 91 (HIGT…QSWE), 93 to 135 (PTPV…DYTK), 148 to 187 (SDAKKVTVAGWSANGDFIIAGHEDGYVSKYNSSTGEFIET), 197 to 239 (EKIA…KVYK), and 295 to 336 (GHFG…FEFD).

The protein belongs to the eIF-3 subunit I family. As to quaternary structure, component of the eukaryotic translation initiation factor 3 (eIF-3) complex.

It is found in the cytoplasm. Functionally, component of the eukaryotic translation initiation factor 3 (eIF-3) complex, which is involved in protein synthesis of a specialized repertoire of mRNAs and, together with other initiation factors, stimulates binding of mRNA and methionyl-tRNAi to the 40S ribosome. The eIF-3 complex specifically targets and initiates translation of a subset of mRNAs involved in cell proliferation. This Debaryomyces hansenii (strain ATCC 36239 / CBS 767 / BCRC 21394 / JCM 1990 / NBRC 0083 / IGC 2968) (Yeast) protein is Eukaryotic translation initiation factor 3 subunit I.